Reading from the N-terminus, the 301-residue chain is tRNA dimethylallyltransferase 2 (301 aa).

Residue 11 to 18 (GATASGKT) participates in ATP binding. 13 to 18 (TASGKT) is a substrate binding site. Residues 36–39 (DSRQ) form an interaction with substrate tRNA region.

This sequence belongs to the IPP transferase family. As to quaternary structure, monomer. Mg(2+) serves as cofactor.

The catalysed reaction is adenosine(37) in tRNA + dimethylallyl diphosphate = N(6)-dimethylallyladenosine(37) in tRNA + diphosphate. Its function is as follows. Catalyzes the transfer of a dimethylallyl group onto the adenine at position 37 in tRNAs that read codons beginning with uridine, leading to the formation of N6-(dimethylallyl)adenosine (i(6)A). The polypeptide is tRNA dimethylallyltransferase 2 (Shewanella sediminis (strain HAW-EB3)).